The primary structure comprises 371 residues: Dual-specificity RNA methyltransferase RlmN (371 aa).

The active-site Proton acceptor is Glu92. Residues 98–337 (EADRATLCVS…VTVRKTRGDD (240 aa)) form the Radical SAM core domain. Cys105 and Cys342 are disulfide-bonded. Residues Cys112, Cys116, and Cys119 each coordinate [4Fe-4S] cluster. Residues 166–167 (GE), Ser198, 220–222 (SLH), and Asn299 contribute to the S-adenosyl-L-methionine site. Cys342 functions as the S-methylcysteine intermediate in the catalytic mechanism.

It belongs to the radical SAM superfamily. RlmN family. Requires [4Fe-4S] cluster as cofactor.

Its subcellular location is the cytoplasm. The catalysed reaction is adenosine(2503) in 23S rRNA + 2 reduced [2Fe-2S]-[ferredoxin] + 2 S-adenosyl-L-methionine = 2-methyladenosine(2503) in 23S rRNA + 5'-deoxyadenosine + L-methionine + 2 oxidized [2Fe-2S]-[ferredoxin] + S-adenosyl-L-homocysteine. It carries out the reaction adenosine(37) in tRNA + 2 reduced [2Fe-2S]-[ferredoxin] + 2 S-adenosyl-L-methionine = 2-methyladenosine(37) in tRNA + 5'-deoxyadenosine + L-methionine + 2 oxidized [2Fe-2S]-[ferredoxin] + S-adenosyl-L-homocysteine. Specifically methylates position 2 of adenine 2503 in 23S rRNA and position 2 of adenine 37 in tRNAs. m2A2503 modification seems to play a crucial role in the proofreading step occurring at the peptidyl transferase center and thus would serve to optimize ribosomal fidelity. In Actinobacillus succinogenes (strain ATCC 55618 / DSM 22257 / CCUG 43843 / 130Z), this protein is Dual-specificity RNA methyltransferase RlmN.